We begin with the raw amino-acid sequence, 314 residues long: Methionyl-tRNA formyltransferase (314 aa).

109 to 112 (SVLP) lines the (6S)-5,6,7,8-tetrahydrofolate pocket.

The protein belongs to the Fmt family.

The enzyme catalyses L-methionyl-tRNA(fMet) + (6R)-10-formyltetrahydrofolate = N-formyl-L-methionyl-tRNA(fMet) + (6S)-5,6,7,8-tetrahydrofolate + H(+). In terms of biological role, attaches a formyl group to the free amino group of methionyl-tRNA(fMet). The formyl group appears to play a dual role in the initiator identity of N-formylmethionyl-tRNA by promoting its recognition by IF2 and preventing the misappropriation of this tRNA by the elongation apparatus. The chain is Methionyl-tRNA formyltransferase from Dictyoglomus turgidum (strain DSM 6724 / Z-1310).